A 327-amino-acid chain; its full sequence is ATP-dependent 6-phosphofructokinase (327 aa).

Residue Gly12 participates in ATP binding. ADP contacts are provided by residues 22–26 and 55–60; these read RGVVR and RYSVSD. ATP is bound by residues 73-74 and 103-106; these read RF and GDGS. Asp104 provides a ligand contact to Mg(2+). Position 127 to 129 (127 to 129) interacts with substrate; the sequence is TID. Residue Asp129 is the Proton acceptor of the active site. Residue Arg156 participates in ADP binding. Residues Arg164 and 171–173 contribute to the substrate site; that span reads MGR. ADP is bound by residues 187–189, Lys213, and 215–217; these read GCE and KKH. Substrate contacts are provided by residues Glu224, Arg245, and 251–254; that span reads HIQR.

It belongs to the phosphofructokinase type A (PFKA) family. ATP-dependent PFK group I subfamily. Prokaryotic clade 'B1' sub-subfamily. Homotetramer. Requires Mg(2+) as cofactor.

It localises to the cytoplasm. The enzyme catalyses beta-D-fructose 6-phosphate + ATP = beta-D-fructose 1,6-bisphosphate + ADP + H(+). Its pathway is carbohydrate degradation; glycolysis; D-glyceraldehyde 3-phosphate and glycerone phosphate from D-glucose: step 3/4. Its activity is regulated as follows. Allosterically activated by ADP and other diphosphonucleosides, and allosterically inhibited by phosphoenolpyruvate. Functionally, catalyzes the phosphorylation of D-fructose 6-phosphate to fructose 1,6-bisphosphate by ATP, the first committing step of glycolysis. In Yersinia pseudotuberculosis serotype IB (strain PB1/+), this protein is ATP-dependent 6-phosphofructokinase.